A 687-amino-acid chain; its full sequence is Solute carrier organic anion transporter family member 1B2 (687 aa).

The Cytoplasmic portion of the chain corresponds to 1–28 (MDHTQQSRKAAEAQPSRSKQTRFCDGFK). A helical membrane pass occupies residues 29–48 (LFLAALSFSYICKALGGVVM). The Extracellular portion of the chain corresponds to 49–67 (KSSITQIERRFDIPSSISG). A helical membrane pass occupies residues 68–88 (LIDGGFEIGNLLVIVFVSYFG). Topologically, residues 89–94 (SKLHRP) are cytoplasmic. A helical transmembrane segment spans residues 95–119 (KLIGIGCFIMGIGSILTALPHFFMG). At 120–165 (YYKYAKENDIGSLGNSTLTCFINQMTSPTGPSPEIVEKGCEKGLKS) the chain is on the extracellular side. Asn-134 carries an N-linked (GlcNAc...) asparagine glycan. The chain crosses the membrane as a helical span at residues 166–194 (HMWIYVLMGNMLRGIGETPIVPLGISYLD). Over 195–213 (DFAKEGHTSMHLGTLHTIA) the chain is Cytoplasmic. Residues 214–234 (MIGPILGFIMSSVFAKIYVDV) form a helical membrane-spanning segment. Residues 235 to 252 (GYVDLNSVRITPNDARWV) are Extracellular-facing. A helical membrane pass occupies residues 253 to 277 (GAWWLSFIVNGLLCITSSIPFFFLP). Topologically, residues 278–328 (KIPKRSQEERKNSVSLHAPKTDEEKKHMTNLTKQEEQDPSNMTGFLRSLRS) are cytoplasmic. The disordered stretch occupies residues 286–311 (ERKNSVSLHAPKTDEEKKHMTNLTKQ). Phosphoserine occurs at positions 290 and 292. A helical transmembrane segment spans residues 329 to 350 (ILTNEIYVIFLILTLLQVSGFI). Residues 351–370 (GSFTYLFKFIEQQFGRTASQ) are Extracellular-facing. Residues 371–394 (ANFLLGIITIPTMATAMFLGGYIV) traverse the membrane as a helical segment. The Cytoplasmic segment spans residues 395–398 (KKFK). Residues 399-422 (LTSVGIAKFVFFTSSVAYAFQFLY) traverse the membrane as a helical segment. Topologically, residues 423–531 (FPLLCENKPF…YKCKTNYYFY (109 aa)) are extracellular. One can recognise a Kazal-like domain in the interval 450 to 507 (DVPLSYCNSDCSCDKNQWEPICGENGVTYISPCLAGCKSFRGDKKPNNTEFYDCSCIS). Cystine bridges form between Cys-456/Cys-486, Cys-462/Cys-482, and Cys-471/Cys-505. 2 N-linked (GlcNAc...) asparagine glycosylation sites follow: Asn-496 and Asn-511. Residues 532–554 (IILQVTVSFFTAMGSPSLILILM) traverse the membrane as a helical segment. At 555–563 (KSVQPELKS) the chain is on the cytoplasmic side. The chain crosses the membrane as a helical span at residues 564-589 (LAMGFHSLIIRALGGILAPIYYGAFI). Over 590-623 (DRTCIKWSVTSCGKRGACRLYNSRLFGFSYLGLN) the chain is Extracellular. Residues 624–641 (LALKTPPLFLYVVLIYFT) traverse the membrane as a helical segment. The Cytoplasmic portion of the chain corresponds to 642 to 687 (KRKYKRNDNKTLENGRQFTDEGNPDSVNKNGYYCVPYDEQSNETPL). Thr-660 carries the post-translational modification Phosphothreonine. Position 667 is a phosphoserine (Ser-667).

Belongs to the organo anion transporter (TC 2.A.60) family. Liver specific. Expression is highest in central perivenous hepatocytes and lowest in the periportal region. Isoform 1 predominates. Not detected in heart, brain, kidney, skeletal muscle, lung, testis or spleen.

It is found in the basolateral cell membrane. It catalyses the reaction estrone 3-sulfate(out) = estrone 3-sulfate(in). It carries out the reaction taurocholate(out) = taurocholate(in). The enzyme catalyses prostaglandin E2(out) = prostaglandin E2(in). The catalysed reaction is L-thyroxine(out) = L-thyroxine(in). Mediates the Na(+)-independent uptake of organic anions such as taurochlate, bromosulfophthalein and steroid conjugates (estrone 3-sulfate, 17-beta-glucuronosyl estradiol, dehydroepiandrosterone sulfate). Also transports prostaglandin E2 and L-thyroxine (T4). Shows a pH-sensitive substrate specificity which may be ascribed to the protonation state of the binding site and leads to a stimulation of substrate transport in an acidic microenvironment. Hydrogencarbonate/HCO3(-) acts as the probable counteranion that exchanges for organic anions. This Rattus norvegicus (Rat) protein is Solute carrier organic anion transporter family member 1B2 (Slco1b2).